The chain runs to 197 residues: Probable GTP-binding protein EngB (197 aa).

One can recognise an EngB-type G domain in the interval 22–194 (DLPEIAFAGR…LETIARMTGI (173 aa)). Residues 30–37 (GRSNVGKS), 57–61 (GKTRL), 75–78 (DLPG), 142–145 (TKAD), and 173–175 (FST) each bind GTP. 2 residues coordinate Mg(2+): S37 and T59.

This sequence belongs to the TRAFAC class TrmE-Era-EngA-EngB-Septin-like GTPase superfamily. EngB GTPase family. Mg(2+) is required as a cofactor.

Its function is as follows. Necessary for normal cell division and for the maintenance of normal septation. The polypeptide is Probable GTP-binding protein EngB (Desulfosudis oleivorans (strain DSM 6200 / JCM 39069 / Hxd3) (Desulfococcus oleovorans)).